Here is a 513-residue protein sequence, read N- to C-terminus: ATP synthase subunit alpha (513 aa).

Glycine 169–threonine 176 provides a ligand contact to ATP.

The protein belongs to the ATPase alpha/beta chains family. In terms of assembly, F-type ATPases have 2 components, CF(1) - the catalytic core - and CF(0) - the membrane proton channel. CF(1) has five subunits: alpha(3), beta(3), gamma(1), delta(1), epsilon(1). CF(0) has three main subunits: a(1), b(2) and c(9-12). The alpha and beta chains form an alternating ring which encloses part of the gamma chain. CF(1) is attached to CF(0) by a central stalk formed by the gamma and epsilon chains, while a peripheral stalk is formed by the delta and b chains.

The protein localises to the cell inner membrane. It catalyses the reaction ATP + H2O + 4 H(+)(in) = ADP + phosphate + 5 H(+)(out). Its function is as follows. Produces ATP from ADP in the presence of a proton gradient across the membrane. The alpha chain is a regulatory subunit. The chain is ATP synthase subunit alpha from Burkholderia vietnamiensis (strain G4 / LMG 22486) (Burkholderia cepacia (strain R1808)).